A 93-amino-acid polypeptide reads, in one-letter code: Small ribosomal subunit protein bS18 (93 aa).

The protein belongs to the bacterial ribosomal protein bS18 family. In terms of assembly, part of the 30S ribosomal subunit. Forms a tight heterodimer with protein bS6.

In terms of biological role, binds as a heterodimer with protein bS6 to the central domain of the 16S rRNA, where it helps stabilize the platform of the 30S subunit. This chain is Small ribosomal subunit protein bS18, found in Delftia acidovorans (strain DSM 14801 / SPH-1).